The following is a 555-amino-acid chain: Glutamine--tRNA ligase (555 aa).

Positions 35 to 45 (PEPNGYLHIGH) match the 'HIGH' region motif. ATP-binding positions include 36 to 38 (EPN) and 42 to 48 (HIGHAKS). L-glutamine-binding residues include D68 and Y213. ATP is bound by residues T232 and 262-263 (RL). A 'KMSKS' region motif is present at residues 269 to 273 (ITSKR).

This sequence belongs to the class-I aminoacyl-tRNA synthetase family. As to quaternary structure, monomer.

Its subcellular location is the cytoplasm. It carries out the reaction tRNA(Gln) + L-glutamine + ATP = L-glutaminyl-tRNA(Gln) + AMP + diphosphate. This Azotobacter vinelandii (strain DJ / ATCC BAA-1303) protein is Glutamine--tRNA ligase.